Reading from the N-terminus, the 91-residue chain is UPF0250 protein PSPTO_4820 (91 aa).

Belongs to the UPF0250 family.

In Pseudomonas syringae pv. tomato (strain ATCC BAA-871 / DC3000), this protein is UPF0250 protein PSPTO_4820.